The sequence spans 280 residues: Threonylcarbamoyl-AMP synthase (280 aa).

The transit peptide at 1–56 (MSTARPCAGLRAAVAAGMGLSDGPAGSSRGCRLLRPPAPAPALPGARLLRLPESEA) directs the protein to the mitochondrion. Phosphoserine is present on S61. Residues 68–258 (TEALRAAVAE…KFGIIRSGCA (191 aa)) enclose the YrdC-like domain.

It belongs to the SUA5 family. In terms of assembly, interacts with RSC1A1.

It is found in the cytoplasm. It localises to the mitochondrion. The protein localises to the cell membrane. It carries out the reaction L-threonine + hydrogencarbonate + ATP = L-threonylcarbamoyladenylate + diphosphate + H2O. In terms of biological role, cytoplasmic and mitochondrial threonylcarbamoyl-AMP synthase required for the formation of a threonylcarbamoyl group on adenosine at position 37 (t(6)A37) in tRNAs that read codons beginning with adenine. Catalyzes the conversion of L-threonine, HCO(3)(-)/CO(2) and ATP to give threonylcarbamoyl-AMP (TC-AMP) as the acyladenylate intermediate, with the release of diphosphate. Participates in t(6)A37 formation in cytoplasmic and mitochondrial tRNAs. May regulate the activity of some transporters. The sequence is that of Threonylcarbamoyl-AMP synthase from Rattus norvegicus (Rat).